The primary structure comprises 189 residues: GTPase KRas (189 aa).

Residue Met1 is modified to N-acetylmethionine. Thr2 bears the N-acetylthreonine; in GTPase KRas, N-terminally processed mark. Residues 10 to 18 (GAGGVGKSA), 29 to 35 (VDEYDPT), and 59 to 60 (AG) contribute to the GTP site. Residues 32–40 (YDPTIEDSY) carry the Effector region motif. N6-acetyllysine is present on Lys104. GTP is bound at residue 116–119 (NKCD). The tract at residues 166–185 (YRLKKISKEEKTPGCVKIKK) is hypervariable region. Lys170 is covalently cross-linked (Glycyl lysine isopeptide (Lys-Gly) (interchain with G-Cter in ubiquitin)). Cys180 carries S-palmitoyl cysteine lipidation. N6-palmitoyl lysine attachment occurs at residues Lys182, Lys184, and Lys185. The residue at position 186 (Cys186) is a Cysteine methyl ester. Residue Cys186 is the site of S-farnesyl cysteine attachment. A propeptide spans 187 to 189 (VIM) (removed in mature form).

This sequence belongs to the small GTPase superfamily. Ras family. Interacts with PHLPP. Interacts (active GTP-bound form preferentially) with RGS14. Interacts (when farnesylated) with PDE6D; this promotes dissociation from the cell membrane. Interacts with SOS1. Interacts (when farnesylated) with GPR31. Interacts with RAP1GDS1. Interacts (active GTP-bound form) with both SHOC2 and PP1c (all isoforms) to form a tertiary complex; SHOC2 and PP1c preferably bind M-Ras/MRAS, but they also bind K-Ras/KRAS, N-Ras/NRAS and H-Ras/HRAS. Interacts (GTP-bound form) with MAPKAP1/SIN1; inhibiting K-Ras/KRAS activity. As to quaternary structure, interacts (when farnesylated) with GPR31. Acetylation at Lys-104 prevents interaction with guanine nucleotide exchange factors (GEFs). In terms of processing, ubiquitinated by the BCR(LZTR1) E3 ubiquitin ligase complex at Lys-170 in a non-degradative manner, leading to inhibit Ras signaling by decreasing Ras association with membranes. Post-translationally, palmitoylated at Lys-182, Lys-184 and Lys-185. Lysine-depalmitoylation by SIRT2 promotes its localization to endomembranes in endocytic pathways.

The protein resides in the cell membrane. Its subcellular location is the endomembrane system. The protein localises to the cytoplasm. It localises to the cytosol. It carries out the reaction GTP + H2O = GDP + phosphate + H(+). With respect to regulation, alternates between an inactive form bound to GDP and an active form bound to GTP. Activated by a guanine nucleotide-exchange factor (GEF) and inactivated by a GTPase-activating protein (GAP). Interaction with SOS1 promotes exchange of bound GDP to GTP. In terms of biological role, ras proteins bind GDP/GTP and possess intrinsic GTPase activity. Plays an important role in the regulation of cell proliferation. Plays a role in promoting oncogenic events by inducing transcriptional silencing of tumor suppressor genes (TSGs) in colorectal cancer (CRC) cells in a ZNF304-dependent manner. The sequence is that of GTPase KRas (Kras) from Rattus norvegicus (Rat).